We begin with the raw amino-acid sequence, 439 residues long: Protein ABHD8 (439 aa).

Disordered stretches follow at residues 54–75 and 122–148; these read HAGPAPIPTPPPPPPEDDPGVK and ELAEPAGGDTRANPGSGRRRRPRRPKR. The segment covering 58-67 has biased composition (pro residues); the sequence is APIPTPPPPP. The segment covering 138–148 has biased composition (basic residues); sequence GRRRRPRRPKR. Residues 169 to 271 form the AB hydrolase-1 domain; that stretch reads VLFFIHGVGG…HKVIMINGGG (103 aa). Residues serine 244, aspartate 362, and histidine 390 each act as charge relay system in the active site. The disordered stretch occupies residues 415–439; sequence EAEPKLEPKPKPQLLQPEPAPGEEK.

It belongs to the AB hydrolase superfamily. In terms of assembly, interacts with NLRP3 (via NACHT and LLR domains); this interaction is enhanced in the presence of NLRP3 inflammasome inducers, such as ATP, nigericin, silica, or alum. Interacts with ZDHHC12.

It is found in the cytoplasm. Its function is as follows. Negatively regulates NLRP3-driven inflammation. Promotes NLRP3 degradation through the chaperone-mediated autophagy (CMA) pathway, hence attenuating inflammasome activation and IL1B secretion. Acts by recruiting palmitoyltransferase ZDHHC12 to NLRP3, facilitating NLRP3 palmitoylation and subsequent degradation. The sequence is that of Protein ABHD8 from Mus musculus (Mouse).